Consider the following 1044-residue polypeptide: Unconventional myosin-Ic (1044 aa).

A Myosin motor domain is found at 28-712; that stretch reads GVQDFVLLEN…TLFATEDSLE (685 aa). ATP-binding positions include Asn69, Tyr77, 120–129, and 173–177; these read SGESGAGKTE and NDNSS. N6-methyllysine is present on Lys364. Ser389 bears the Phosphoserine mark. Lys467 bears the N6-acetyllysine mark. Ser517 is subject to Phosphoserine. Residues 589–611 are actin-binding; it reads LLQLVEILRSKEPAYIRCIKPND. 2 IQ domains span residues 715–744 and 738–767; these read RQSLATKIQAAWRGFHWRQKFLRVKRSAIC and VKRSAICIQSWWRGTLGRRKAAKRKWAAQT. Phosphoserine is present on residues Ser845 and Ser1022. One can recognise a TH1 domain in the interval 866 to 1040; that stretch reads KDNYPQSVPR…NGHLAVVAPR (175 aa).

This sequence belongs to the TRAFAC class myosin-kinesin ATPase superfamily. Myosin family. As to quaternary structure, interacts (via its IQ motifs) with CABP1 and CIB1; the interaction with CABP1 and CIB1 is calcium-dependent. Interacts (via tail domain) with PLEKHB1 (via PH domain); the interaction is not affected by the presence or absence of calcium and CALM. Interacts with POLR1A. Interacts with POLR2A. Component of the B-WICH complex, at least composed of SMARCA5/SNF2H, BAZ1B/WSTF, SF3B1, DEK, MYO1C, ERCC6, MYBBP1A and DDX21. Interacts (via its IQ motifs) with CALM; this precludes interaction with YWHAB. Interacts with YWHAB; this precludes interaction with CALM. Interacts with RPS6. Interacts with actin. Interacts with LLPH. Interacts with GLUT4. Interacts (via its IQ motifs) with SH3BGRL3; the interaction is dependent on calcium and takes place at membrane ruffles.

It is found in the cytoplasm. The protein localises to the nucleus. Its subcellular location is the cell cortex. It localises to the cell projection. The protein resides in the stereocilium membrane. It is found in the cytoplasmic vesicle. The protein localises to the ruffle membrane. Functionally, myosins are actin-based motor molecules with ATPase activity. Unconventional myosins serve in intracellular movements. Their highly divergent tails are presumed to bind to membranous compartments, which would be moved relative to actin filaments. Involved in glucose transporter recycling in response to insulin by regulating movement of intracellular GLUT4-containing vesicles to the plasma membrane. Component of the hair cell's (the sensory cells of the inner ear) adaptation-motor complex. Acts as a mediator of adaptation of mechanoelectrical transduction in stereocilia of vestibular hair cells. Binds phosphoinositides and links the actin cytoskeleton to cellular membranes. The protein is Unconventional myosin-Ic (Myo1c) of Rattus norvegicus (Rat).